A 445-amino-acid chain; its full sequence is Rab GDP dissociation inhibitor beta (445 aa).

At M1 the chain carries N-acetylmethionine. K57 carries the post-translational modification N6-succinyllysine. K112 carries the post-translational modification N6-acetyllysine. S130 carries the post-translational modification Phosphoserine. N6-acetyllysine is present on K269. S382 is modified (phosphoserine).

This sequence belongs to the Rab GDI family. In terms of assembly, interacts with RHOH. Interacts with the GDP-bound inactive forms of RAB3A, RAB3B, RAB3C, RAB5A, RAB5B, RAB5C, RAB8A, RAB8B, RAB10, RAB12, RAB35, and RAB43; binds RAB3D to a lesser extent. Interacts with DZIP1; this interaction negatively regulates the interaction of GDI2 with GDP-bound RAB8A. Ubiquitously expressed.

The protein localises to the cytoplasm. It localises to the membrane. Its subcellular location is the golgi apparatus. It is found in the trans-Golgi network. In terms of biological role, GDP-dissociation inhibitor preventing the GDP to GTP exchange of most Rab proteins. By keeping these small GTPases in their inactive GDP-bound form regulates intracellular membrane trafficking. Negatively regulates protein transport to the cilium and ciliogenesis through the inhibition of RAB8A. This chain is Rab GDP dissociation inhibitor beta (GDI2), found in Bos taurus (Bovine).